The following is a 116-amino-acid chain: Large ribosomal subunit protein eL30 (116 aa).

Belongs to the eukaryotic ribosomal protein eL30 family. Component of the large ribosomal subunit.

Its subcellular location is the cytoplasm. Its function is as follows. Component of the large ribosomal subunit. The ribosome is a large ribonucleoprotein complex responsible for the synthesis of proteins in the cell. This is Large ribosomal subunit protein eL30 (rpl30) from Ictalurus punctatus (Channel catfish).